Here is a 156-residue protein sequence, read N- to C-terminus: ATP synthase subunit b (156 aa).

Residues 12 to 32 (VAFFIFVLFCMKFVWPPVIAA) traverse the membrane as a helical segment.

It belongs to the ATPase B chain family. F-type ATPases have 2 components, F(1) - the catalytic core - and F(0) - the membrane proton channel. F(1) has five subunits: alpha(3), beta(3), gamma(1), delta(1), epsilon(1). F(0) has three main subunits: a(1), b(2) and c(10-14). The alpha and beta chains form an alternating ring which encloses part of the gamma chain. F(1) is attached to F(0) by a central stalk formed by the gamma and epsilon chains, while a peripheral stalk is formed by the delta and b chains.

It localises to the cell inner membrane. In terms of biological role, f(1)F(0) ATP synthase produces ATP from ADP in the presence of a proton or sodium gradient. F-type ATPases consist of two structural domains, F(1) containing the extramembraneous catalytic core and F(0) containing the membrane proton channel, linked together by a central stalk and a peripheral stalk. During catalysis, ATP synthesis in the catalytic domain of F(1) is coupled via a rotary mechanism of the central stalk subunits to proton translocation. Component of the F(0) channel, it forms part of the peripheral stalk, linking F(1) to F(0). This chain is ATP synthase subunit b, found in Pseudomonas syringae pv. syringae (strain B728a).